Reading from the N-terminus, the 217-residue chain is Fucoxanthin-chlorophyll a-c binding protein A, chloroplastic (217 aa).

The N-terminal 39 residues, 1–39 (MKSAVMAVACAAAPGLRRPSAFNGAALTTSAKSSSAMKM), are a transit peptide targeting the chloroplast. 3 consecutive transmembrane segments (helical) span residues 81-101 (IAMLAIAGHLTQQNARLPGML), 122-142 (IPPAGLAQIFAFIGFLELAVM), and 183-203 (GRAAQMGILALMVHEELNNKP).

The protein belongs to the fucoxanthin chlorophyll protein family. In terms of assembly, the LHC complex of chromophytic algae is composed of fucoxanthin, chlorophyll A and C bound non-covalently by fucoxanthin chlorophyll proteins (FCPs). The ratio of pigments in this LHC is; fucoxanthin: chlorophyll C: chlorophyll A; (0.6-1): (0.1-0.3): (1).

It is found in the plastid. The protein resides in the chloroplast thylakoid membrane. The light-harvesting complex (LHC) functions as a light receptor, it captures and delivers excitation energy to photosystems with which it is closely associated. Energy is transferred from the carotenoid and chlorophyll C (or B) to chlorophyll A and the photosynthetic reaction centers where it is used to synthesize ATP and reducing power. This is Fucoxanthin-chlorophyll a-c binding protein A, chloroplastic (FCPA) from Macrocystis pyrifera (Giant kelp).